Reading from the N-terminus, the 374-residue chain is tRNA-specific 2-thiouridylase MnmA (374 aa).

ATP-binding positions include 16–23 (GMSGGVDS) and Met42. The segment at 102–104 (NPD) is interaction with target base in tRNA. Cys107 (nucleophile) is an active-site residue. Cysteines 107 and 203 form a disulfide. Gly131 contacts ATP. The tract at residues 153–155 (KDQ) is interaction with tRNA. Cys203 acts as the Cysteine persulfide intermediate in catalysis. The segment at 311-312 (RY) is interaction with tRNA.

Belongs to the MnmA/TRMU family.

It is found in the cytoplasm. The enzyme catalyses S-sulfanyl-L-cysteinyl-[protein] + uridine(34) in tRNA + AH2 + ATP = 2-thiouridine(34) in tRNA + L-cysteinyl-[protein] + A + AMP + diphosphate + H(+). Functionally, catalyzes the 2-thiolation of uridine at the wobble position (U34) of tRNA, leading to the formation of s(2)U34. The polypeptide is tRNA-specific 2-thiouridylase MnmA (Exiguobacterium sibiricum (strain DSM 17290 / CCUG 55495 / CIP 109462 / JCM 13490 / 255-15)).